Reading from the N-terminus, the 307-residue chain is MTETTKTHVILLACGSFNPITKGHIQMFERARDYLHKTGRFIVIGGIVSPVHDSYGKQGLVSSRHRLIMCQLAVQNSDWIRVDPWECYQDTWQTTCSVLEHHRDLMKRVTGCILSNVNTPSMTPVIGQPQNETPQPIYQNSNVPTKPTAAKILGKVGESLSRICCVRPPVERFTFVDENANLGTVMRYEEIELRILLLCGSDLLESFCIPGLWNEADMEVIVGDFGIVVVPRDAADTDRIMNHSSILRKYKNNIMVVKDDINHPMSVVSSTKSRLALQHGDGHVVDYLSQPVIDYILKSQLYINASG.

Residues Ser-16 and Phe-17 each coordinate NAD(+). His-24 lines the ATP pocket. NAD(+) contacts are provided by Trp-92 and Thr-95. S-palmitoyl cysteine attachment occurs at residues Cys-164 and Cys-165. The NAD(+) site is built by Gly-200, Asp-202, Leu-212, Trp-213, and Arg-232. ATP is bound at residue 271–274; it reads TKSR.

It belongs to the eukaryotic NMN adenylyltransferase family. Monomer. Mg(2+) is required as a cofactor. In terms of processing, degraded in response to injured neurite. Degradation is caused by polyubiquitination by MYCBP2 after recognition by FBXO45. Palmitoylated; palmitoylation is required for membrane association.

It localises to the golgi apparatus membrane. Its subcellular location is the cytoplasmic vesicle membrane. It is found in the cytoplasm. The protein resides in the cell projection. The protein localises to the axon. It catalyses the reaction beta-nicotinamide D-ribonucleotide + ATP + H(+) = diphosphate + NAD(+). The enzyme catalyses nicotinate beta-D-ribonucleotide + ATP + H(+) = deamido-NAD(+) + diphosphate. It functions in the pathway cofactor biosynthesis; NAD(+) biosynthesis; NAD(+) from nicotinamide D-ribonucleotide: step 1/1. The protein operates within cofactor biosynthesis; NAD(+) biosynthesis; deamido-NAD(+) from nicotinate D-ribonucleotide: step 1/1. With respect to regulation, inhibited by P1-(adenosine-5')-P3-(nicotinamide-riboside-5')-triphosphate (Np3AD) and P1-(adenosine-5')-P4-(nicotinamide-riboside-5')-tetraphosphate (Np4AD). Its function is as follows. Nicotinamide/nicotinate-nucleotide adenylyltransferase that acts as an axon maintenance factor. Axon survival factor required for the maintenance of healthy axons: acts by delaying Wallerian axon degeneration, an evolutionarily conserved process that drives the loss of damaged axons. Catalyzes the formation of NAD(+) from nicotinamide mononucleotide (NMN) and ATP. Can also use the deamidated form; nicotinic acid mononucleotide (NaMN) as substrate but with a lower efficiency. Cannot use triazofurin monophosphate (TrMP) as substrate. Also catalyzes the reverse reaction, i.e. the pyrophosphorolytic cleavage of NAD(+). For the pyrophosphorolytic activity prefers NAD(+), NADH and NaAD as substrates and degrades nicotinic acid adenine dinucleotide phosphate (NHD) less effectively. Fails to cleave phosphorylated dinucleotides NADP(+), NADPH and NaADP(+). Also acts as an activator of ADP-ribosylation by supporting the catalytic activity of PARP16 and promoting mono-ADP-ribosylation of ribosomes by PARP16. May be involved in the maintenance of axonal integrity. This chain is Nicotinamide/nicotinic acid mononucleotide adenylyltransferase 2 (NMNAT2), found in Pongo abelii (Sumatran orangutan).